The following is a 133-amino-acid chain: Agglutinin alpha chain (133 aa).

Residues 1–133 (GVTFDDGAYT…LDYFSIYLSL (133 aa)) enclose the Jacalin-type lectin domain.

Belongs to the jacalin lectin family. In terms of assembly, formed of four alpha chains and four beta chains.

Functionally, D-galactose-specific lectin, binds the T-antigen structure Gal-beta1,3-GalNAc. The polypeptide is Agglutinin alpha chain (Maclura pomifera (Osage orange)).